The following is a 30-amino-acid chain: Cyclotide vdif-A (30 aa).

The segment at residues 1-30 is a cross-link (cyclopeptide (Gly-Asn)); it reads GIPCGESCVFIPCISSVVGCSCKSKVCYRN. Disulfide bonds link cysteine 4–cysteine 20, cysteine 8–cysteine 22, and cysteine 13–cysteine 27.

The protein belongs to the cyclotide family. Bracelet subfamily. This is a cyclic peptide.

Probably participates in a plant defense mechanism. This is Cyclotide vdif-A from Viola diffusa.